We begin with the raw amino-acid sequence, 124 residues long: Holo-[acyl-carrier-protein] synthase (124 aa).

2 residues coordinate Mg(2+): aspartate 8 and glutamate 55.

The protein belongs to the P-Pant transferase superfamily. AcpS family. Requires Mg(2+) as cofactor.

It is found in the cytoplasm. It catalyses the reaction apo-[ACP] + CoA = holo-[ACP] + adenosine 3',5'-bisphosphate + H(+). Functionally, transfers the 4'-phosphopantetheine moiety from coenzyme A to a Ser of acyl-carrier-protein. The chain is Holo-[acyl-carrier-protein] synthase from Desulfovibrio desulfuricans (strain ATCC 27774 / DSM 6949 / MB).